Here is a 165-residue protein sequence, read N- to C-terminus: Probable chemoreceptor glutamine deamidase CheD (165 aa).

This sequence belongs to the CheD family.

It carries out the reaction L-glutaminyl-[protein] + H2O = L-glutamyl-[protein] + NH4(+). Functionally, probably deamidates glutamine residues to glutamate on methyl-accepting chemotaxis receptors (MCPs), playing an important role in chemotaxis. This Symbiobacterium thermophilum (strain DSM 24528 / JCM 14929 / IAM 14863 / T) protein is Probable chemoreceptor glutamine deamidase CheD.